Consider the following 191-residue polypeptide: Glycerol-3-phosphate acyltransferase (191 aa).

5 helical membrane-spanning segments follow: residues I5 to I25, C50 to A70, S78 to L98, I112 to F132, and S153 to F173.

It belongs to the PlsY family. In terms of assembly, probably interacts with PlsX.

Its subcellular location is the cell membrane. It catalyses the reaction an acyl phosphate + sn-glycerol 3-phosphate = a 1-acyl-sn-glycero-3-phosphate + phosphate. Its pathway is lipid metabolism; phospholipid metabolism. In terms of biological role, catalyzes the transfer of an acyl group from acyl-phosphate (acyl-PO(4)) to glycerol-3-phosphate (G3P) to form lysophosphatidic acid (LPA). This enzyme utilizes acyl-phosphate as fatty acyl donor, but not acyl-CoA or acyl-ACP. This Wolbachia sp. subsp. Brugia malayi (strain TRS) protein is Glycerol-3-phosphate acyltransferase.